Reading from the N-terminus, the 109-residue chain is Small ribosomal subunit protein bS16 (109 aa).

The segment at 87 to 109 is disordered; the sequence is ALRETPKKSAPKAKAQERAKAAG. Residues 100–109 are compositionally biased toward basic and acidic residues; it reads KAQERAKAAG.

Belongs to the bacterial ribosomal protein bS16 family.

The sequence is that of Small ribosomal subunit protein bS16 from Rhodospirillum centenum (strain ATCC 51521 / SW).